A 124-amino-acid chain; its full sequence is Autophagy-related protein 8 (124 aa).

A lipid anchor (Phosphatidylethanolamine amidated glycine) is attached at Gly-116. The propeptide at 117–124 is removed in mature form; it reads GAGPLLEK.

The protein belongs to the ATG8 family. Conjugation to phosphatidylethanolamine (PE) leads to homodimerization. Interacts with ATG1, ATG3, ATG4, ATG7 and ATG12. In terms of processing, the C-terminal 8 residues of ATG8 are removed by ATG4 to expose Gly-116 at the C-terminus. This Gly-116 forms then a thioester bond with the 'Cys-550' of ATG7 (E1-like activating enzyme) before being transferred to the 'Cys-244' of ATG3 (the specific E2 conjugating enzyme), in order to be finally amidated with phosphatidylethanolamine. This lipid modification anchors ATG8 to membranes and can be reversed by ATG4, releasing soluble ATG8.

The protein localises to the cytoplasmic vesicle. It is found in the cvt vesicle membrane. Its subcellular location is the autophagosome membrane. It localises to the vacuole membrane. Ubiquitin-like modifier involved in cytoplasm to vacuole transport (Cvt) vesicles and autophagosome formation. With ATG4, mediates the delivery of the vesicles and autophagosomes to the vacuole via the microtubule cytoskeleton. Required for selective autophagic degradation of the nucleus (nucleophagy) as well as for mitophagy which contributes to regulate mitochondrial quantity and quality by eliminating the mitochondria to a basal level to fulfill cellular energy requirements and preventing excess ROS production. Also participates in membrane fusion events that take place in the early secretory pathway. Also involved in endoplasmic reticulum-specific autophagic process and is essential for the survival of cells subjected to severe ER stress. The ATG8-PE conjugate mediates tethering between adjacent membranes and stimulates membrane hemifusion, leading to expansion of the autophagosomal membrane during autophagy. Moreover not only conjugation, but also subsequent ATG8-PE deconjugation is an important step required to facilitate multiple events during macroautophagy, and especially for efficient autophagosome biogenesis, the assembly of ATG9-containing tubulovesicular clusters into phagophores/autophagosomes, and for the disassembly of PAS-associated ATG components. The polypeptide is Autophagy-related protein 8 (Kluyveromyces marxianus (strain DMKU3-1042 / BCC 29191 / NBRC 104275) (Yeast)).